Here is a 763-residue protein sequence, read N- to C-terminus: Phosphoglycerol transferase I (763 aa).

4 helical membrane passes run 1–21 (MSEL…AWKA), 26–46 (WWFA…ITLF), 77–97 (ILPG…LGWI), and 108–128 (FGYS…SPAF).

Belongs to the OpgB family.

It localises to the cell inner membrane. It catalyses the reaction a phosphatidylglycerol + a membrane-derived-oligosaccharide D-glucose = a 1,2-diacyl-sn-glycerol + a membrane-derived-oligosaccharide 6-(glycerophospho)-D-glucose.. It functions in the pathway glycan metabolism; osmoregulated periplasmic glucan (OPG) biosynthesis. Functionally, transfers a phosphoglycerol residue from phosphatidylglycerol to the membrane-bound nascent glucan backbones. This is Phosphoglycerol transferase I from Escherichia coli O45:K1 (strain S88 / ExPEC).